Here is a 311-residue protein sequence, read N- to C-terminus: tRNA dimethylallyltransferase (311 aa).

Residue 10-17 coordinates ATP; sequence GPTASGKT. 12-17 is a substrate binding site; the sequence is TASGKT. 3 interaction with substrate tRNA regions span residues 35-38, 159-163, and 240-245; these read DSAL, QRINR, and RCVGYR.

It belongs to the IPP transferase family. Monomer. It depends on Mg(2+) as a cofactor.

It catalyses the reaction adenosine(37) in tRNA + dimethylallyl diphosphate = N(6)-dimethylallyladenosine(37) in tRNA + diphosphate. In terms of biological role, catalyzes the transfer of a dimethylallyl group onto the adenine at position 37 in tRNAs that read codons beginning with uridine, leading to the formation of N6-(dimethylallyl)adenosine (i(6)A). The chain is tRNA dimethylallyltransferase from Haemophilus influenzae (strain 86-028NP).